A 74-amino-acid chain; its full sequence is Ubiquitin-like protein FUBI (74 aa).

It belongs to the ubiquitin family.

The protein is Ubiquitin-like protein FUBI (Fau) of Rattus norvegicus (Rat).